We begin with the raw amino-acid sequence, 395 residues long: Elongation factor Tu (395 aa).

Positions 10–204 constitute a tr-type G domain; it reads KPHLNIGTIG…AVDTWIELPE (195 aa). The tract at residues 19–26 is G1; it reads GHVDHGKT. 19 to 26 is a GTP binding site; sequence GHVDHGKT. Thr26 provides a ligand contact to Mg(2+). The interval 60–64 is G2; the sequence is GITIN. The segment at 81-84 is G3; that stretch reads DCPG. GTP is bound by residues 81–85 and 136–139; these read DCPGH and NKVD. Residues 136–139 form a G4 region; sequence NKVD. The segment at 174–176 is G5; it reads SAL.

It belongs to the TRAFAC class translation factor GTPase superfamily. Classic translation factor GTPase family. EF-Tu/EF-1A subfamily. In terms of assembly, monomer.

The protein localises to the cytoplasm. The enzyme catalyses GTP + H2O = GDP + phosphate + H(+). Functionally, GTP hydrolase that promotes the GTP-dependent binding of aminoacyl-tRNA to the A-site of ribosomes during protein biosynthesis. This Christiangramia forsetii (strain DSM 17595 / CGMCC 1.15422 / KT0803) (Gramella forsetii) protein is Elongation factor Tu.